Here is a 235-residue protein sequence, read N- to C-terminus: Sugar fermentation stimulation protein homolog (235 aa).

Belongs to the SfsA family.

The polypeptide is Sugar fermentation stimulation protein homolog (Ectopseudomonas mendocina (strain ymp) (Pseudomonas mendocina)).